The primary structure comprises 231 residues: Succinate dehydrogenase subunit 5, mitochondrial (231 aa).

A mitochondrion-targeting transit peptide spans 1 to 63 (MAAALRSSCA…AFSWNLRRLF (63 aa)).

In terms of assembly, component of complex II composed of eight subunits in plants: four classical SDH subunits SDH1, SDH2, SDH3 and SDH4 (a flavoprotein (FP), an iron-sulfur protein (IP), and a cytochrome b composed of a large and a small subunit.), as well as four subunits unknown in mitochondria from bacteria and heterotrophic eukaryotes.

It is found in the mitochondrion inner membrane. It participates in carbohydrate metabolism; tricarboxylic acid cycle. The polypeptide is Succinate dehydrogenase subunit 5, mitochondrial (Oryza sativa subsp. japonica (Rice)).